The primary structure comprises 572 residues: Asparagine synthetase [glutamine-hydrolyzing] 1 (572 aa).

C2 functions as the For GATase activity in the catalytic mechanism. Residues 2–186 (CGIFAAFRHE…PGHVYDSKTD (185 aa)) enclose the Glutamine amidotransferase type-2 domain. L-glutamine is bound by residues 49 to 53 (RLAIV), 74 to 76 (NGE), and D97. Residues 194 to 546 (PDWLDEKRIP…QKTVADTVMR (353 aa)) form the Asparagine synthetase domain. An ATP-binding site is contributed by L233. S265 is modified (phosphoserine). Residues I292 and 366–367 (SG) each bind ATP. S509 bears the Phosphoserine mark.

The catalysed reaction is L-aspartate + L-glutamine + ATP + H2O = L-asparagine + L-glutamate + AMP + diphosphate + H(+). Its pathway is amino-acid biosynthesis; L-asparagine biosynthesis; L-asparagine from L-aspartate (L-Gln route): step 1/1. In Saccharomyces cerevisiae (strain ATCC 204508 / S288c) (Baker's yeast), this protein is Asparagine synthetase [glutamine-hydrolyzing] 1 (ASN1).